Consider the following 355-residue polypeptide: Alanine racemase (355 aa).

Lys-34 acts as the Proton acceptor; specific for D-alanine in catalysis. The residue at position 34 (Lys-34) is an N6-(pyridoxal phosphate)lysine. Arg-133 lines the substrate pocket. Catalysis depends on Tyr-249, which acts as the Proton acceptor; specific for L-alanine. Residue Met-297 coordinates substrate.

It belongs to the alanine racemase family. The cofactor is pyridoxal 5'-phosphate.

It catalyses the reaction L-alanine = D-alanine. Its pathway is amino-acid biosynthesis; D-alanine biosynthesis; D-alanine from L-alanine: step 1/1. In terms of biological role, catalyzes the interconversion of L-alanine and D-alanine. May also act on other amino acids. This is Alanine racemase (alr) from Rickettsia canadensis (strain McKiel).